Reading from the N-terminus, the 54-residue chain is Defensin-like protein 1 (54 aa).

4 disulfide bridges follow: Cys6–Cys54, Cys17–Cys39, Cys23–Cys48, and Cys27–Cys50.

It belongs to the DEFL family.

It localises to the secreted. Functionally, possesses antifungal activity insensitive to inorganic cations. Causes germ tubes and hyphae to swell and form multiple hyphal buds. Binds to the plasma membrane of the fungus. Has no inhibitory effect on insect gut alpha-amylase. In Heuchera sanguinea (Coralbells), this protein is Defensin-like protein 1.